A 130-amino-acid chain; its full sequence is Small ribosomal subunit protein uS8 (130 aa).

It belongs to the universal ribosomal protein uS8 family. In terms of assembly, part of the 30S ribosomal subunit. Contacts proteins S5 and S12.

Functionally, one of the primary rRNA binding proteins, it binds directly to 16S rRNA central domain where it helps coordinate assembly of the platform of the 30S subunit. This Psychromonas ingrahamii (strain DSM 17664 / CCUG 51855 / 37) protein is Small ribosomal subunit protein uS8.